A 363-amino-acid chain; its full sequence is UDP-3-O-acylglucosamine N-acyltransferase (363 aa).

The Proton acceptor role is filled by histidine 266.

This sequence belongs to the transferase hexapeptide repeat family. LpxD subfamily. Homotrimer.

The enzyme catalyses a UDP-3-O-[(3R)-3-hydroxyacyl]-alpha-D-glucosamine + a (3R)-hydroxyacyl-[ACP] = a UDP-2-N,3-O-bis[(3R)-3-hydroxyacyl]-alpha-D-glucosamine + holo-[ACP] + H(+). The protein operates within bacterial outer membrane biogenesis; LPS lipid A biosynthesis. In terms of biological role, catalyzes the N-acylation of UDP-3-O-acylglucosamine using 3-hydroxyacyl-ACP as the acyl donor. Is involved in the biosynthesis of lipid A, a phosphorylated glycolipid that anchors the lipopolysaccharide to the outer membrane of the cell. The protein is UDP-3-O-acylglucosamine N-acyltransferase of Bordetella pertussis (strain Tohama I / ATCC BAA-589 / NCTC 13251).